The chain runs to 169 residues: Phosphopantetheine adenylyltransferase (169 aa).

Substrate is bound at residue T14. ATP is bound by residues T14–F15 and H22. 3 residues coordinate substrate: K46, L78, and R92. Residues G93–R95, E103, and H128–S134 contribute to the ATP site.

This sequence belongs to the bacterial CoaD family. In terms of assembly, homohexamer. Requires Mg(2+) as cofactor.

The protein resides in the cytoplasm. It catalyses the reaction (R)-4'-phosphopantetheine + ATP + H(+) = 3'-dephospho-CoA + diphosphate. The protein operates within cofactor biosynthesis; coenzyme A biosynthesis; CoA from (R)-pantothenate: step 4/5. Reversibly transfers an adenylyl group from ATP to 4'-phosphopantetheine, yielding dephospho-CoA (dPCoA) and pyrophosphate. The polypeptide is Phosphopantetheine adenylyltransferase (Stenotrophomonas maltophilia (strain R551-3)).